We begin with the raw amino-acid sequence, 191 residues long: 3-isopropylmalate dehydratase small subunit (191 aa).

The protein belongs to the LeuD family. LeuD type 1 subfamily. As to quaternary structure, heterodimer of LeuC and LeuD.

The enzyme catalyses (2R,3S)-3-isopropylmalate = (2S)-2-isopropylmalate. It functions in the pathway amino-acid biosynthesis; L-leucine biosynthesis; L-leucine from 3-methyl-2-oxobutanoate: step 2/4. Catalyzes the isomerization between 2-isopropylmalate and 3-isopropylmalate, via the formation of 2-isopropylmaleate. This chain is 3-isopropylmalate dehydratase small subunit, found in Anaeromyxobacter dehalogenans (strain 2CP-C).